Consider the following 375-residue polypeptide: Putative F-box only protein 11 (375 aa).

Residues 1–46 (MVSVNLPWELVEEILCRVPPQSLVKFRTVCKQWNSLFDDNKFVNDH) form the F-box domain.

The sequence is that of Putative F-box only protein 11 (FBX11) from Arabidopsis thaliana (Mouse-ear cress).